The sequence spans 113 residues: Large ribosomal subunit protein bL17 (113 aa).

This sequence belongs to the bacterial ribosomal protein bL17 family. Part of the 50S ribosomal subunit. Contacts protein L32.

The sequence is that of Large ribosomal subunit protein bL17 from Clostridium botulinum (strain ATCC 19397 / Type A).